Consider the following 416-residue polypeptide: Serine hydroxymethyltransferase (416 aa).

(6S)-5,6,7,8-tetrahydrofolate-binding positions include leucine 120 and 124–126 (GHL). Lysine 230 is subject to N6-(pyridoxal phosphate)lysine. Residue glutamate 246 participates in (6S)-5,6,7,8-tetrahydrofolate binding.

It belongs to the SHMT family. In terms of assembly, homodimer. The cofactor is pyridoxal 5'-phosphate.

The protein localises to the cytoplasm. It carries out the reaction (6R)-5,10-methylene-5,6,7,8-tetrahydrofolate + glycine + H2O = (6S)-5,6,7,8-tetrahydrofolate + L-serine. Its pathway is one-carbon metabolism; tetrahydrofolate interconversion. It functions in the pathway amino-acid biosynthesis; glycine biosynthesis; glycine from L-serine: step 1/1. Functionally, catalyzes the reversible interconversion of serine and glycine with tetrahydrofolate (THF) serving as the one-carbon carrier. This reaction serves as the major source of one-carbon groups required for the biosynthesis of purines, thymidylate, methionine, and other important biomolecules. Also exhibits THF-independent aldolase activity toward beta-hydroxyamino acids, producing glycine and aldehydes, via a retro-aldol mechanism. The chain is Serine hydroxymethyltransferase from Onion yellows phytoplasma (strain OY-M).